We begin with the raw amino-acid sequence, 111 residues long: Large ribosomal subunit protein eL31 (111 aa).

The protein belongs to the eukaryotic ribosomal protein eL31 family.

The sequence is that of Large ribosomal subunit protein eL31 (RPL31) from Tetrahymena thermophila (strain SB210).